Reading from the N-terminus, the 269-residue chain is Tryptophan synthase alpha chain (269 aa).

Catalysis depends on proton acceptor residues E49 and D60.

It belongs to the TrpA family. Tetramer of two alpha and two beta chains.

The catalysed reaction is (1S,2R)-1-C-(indol-3-yl)glycerol 3-phosphate + L-serine = D-glyceraldehyde 3-phosphate + L-tryptophan + H2O. It functions in the pathway amino-acid biosynthesis; L-tryptophan biosynthesis; L-tryptophan from chorismate: step 5/5. The alpha subunit is responsible for the aldol cleavage of indoleglycerol phosphate to indole and glyceraldehyde 3-phosphate. The sequence is that of Tryptophan synthase alpha chain from Actinobacillus pleuropneumoniae serotype 5b (strain L20).